We begin with the raw amino-acid sequence, 162 residues long: Phosphopantetheine adenylyltransferase (162 aa).

Substrate is bound at residue S9. ATP contacts are provided by residues 9-10 and H17; that span reads SF. K41, I77, and K91 together coordinate substrate. Residues 92-94, E102, and 126-132 each bind ATP; these read GLR and YAFLSSS.

This sequence belongs to the bacterial CoaD family. As to quaternary structure, homohexamer. Mg(2+) serves as cofactor.

The protein resides in the cytoplasm. The catalysed reaction is (R)-4'-phosphopantetheine + ATP + H(+) = 3'-dephospho-CoA + diphosphate. The protein operates within cofactor biosynthesis; coenzyme A biosynthesis; CoA from (R)-pantothenate: step 4/5. Reversibly transfers an adenylyl group from ATP to 4'-phosphopantetheine, yielding dephospho-CoA (dPCoA) and pyrophosphate. The sequence is that of Phosphopantetheine adenylyltransferase from Frankia casuarinae (strain DSM 45818 / CECT 9043 / HFP020203 / CcI3).